The following is a 191-amino-acid chain: Protein GrpE (191 aa).

The span at 1–21 (MSDKKKNAEEFEETFSDKTSE) shows a compositional bias: basic and acidic residues. The tract at residues 1–39 (MSDKKKNAEEFEETFSDKTSEDESTVENETVEENENEDV) is disordered. Over residues 22–38 (DESTVENETVEENENED) the composition is skewed to acidic residues.

This sequence belongs to the GrpE family. Homodimer.

The protein localises to the cytoplasm. Functionally, participates actively in the response to hyperosmotic and heat shock by preventing the aggregation of stress-denatured proteins, in association with DnaK and GrpE. It is the nucleotide exchange factor for DnaK and may function as a thermosensor. Unfolded proteins bind initially to DnaJ; upon interaction with the DnaJ-bound protein, DnaK hydrolyzes its bound ATP, resulting in the formation of a stable complex. GrpE releases ADP from DnaK; ATP binding to DnaK triggers the release of the substrate protein, thus completing the reaction cycle. Several rounds of ATP-dependent interactions between DnaJ, DnaK and GrpE are required for fully efficient folding. The chain is Protein GrpE from Tetragenococcus halophilus (Pediococcus halophilus).